We begin with the raw amino-acid sequence, 418 residues long: Acyl-[acyl-carrier-protein] desaturase 4, chloroplastic (418 aa).

Residues Met-1 to Ala-70 constitute a chloroplast transit peptide. The Fe cation site is built by Glu-152, Glu-190, His-193, Glu-243, Glu-276, and His-279.

The protein belongs to the fatty acid desaturase type 2 family. As to quaternary structure, homodimer. Fe(2+) is required as a cofactor.

The protein localises to the plastid. Its subcellular location is the chloroplast. Its pathway is lipid metabolism; fatty acid metabolism. Functionally, introduces a cis double bond in the acyl chain of an acyl-[acyl-carrier protein]. This Oryza sativa subsp. japonica (Rice) protein is Acyl-[acyl-carrier-protein] desaturase 4, chloroplastic.